A 540-amino-acid polypeptide reads, in one-letter code: MSNKLAEIGNNIDSRYTAASGIRRQINKVFPTHWSFMLGEIALYSFIILLLTGVYLTLFFDPSITKVIYDGAYLPLNGVEMSRAYETALNLSFEVRGGLFIRQMHHWAALTFMVSMTVHMLRIFFTGAFRRPREANWIIGCVLLFLGMAEGFMGYSLPDDLLSGVGLRIMSAIILALPIIGTWLHWLIFGGDFPSDLMLDRFYIAHVLIIPGIILGLIAAHLALVWYQKHTQFPGAGRTENNVVGVRILPVFILETSSFGLVTFGVLALLAGLTSINAIWNLGPYNPSQVSAGSQPDIYMLWTDGAARVMPAWELYIGSYTIPGAFWVALLCGVLVGLLVGYPFIEKKITGDDAHHNLLQRPRDVPVRTSLGVMAIVFYFLLTLSGGNDLFAYHFEVSLNAMTWVGRIGLIVLPPLAYFITYRICLGLQRSDREVLEHGIETGVIKIMPNGAFVEVHQPLGPVDEHGHPVPLPYAGAPVPKQLNDLGFGGEPGRGGYFTPDNDSLAAKYAEIEHENHLEEMAMYKNLQKNNRAQDGVEED.

Residues 40–60 traverse the membrane as a helical segment; the sequence is EIALYSFIILLLTGVYLTLFF. Residues His105 and His119 each contribute to the heme site. Helical transmembrane passes span 109–129, 137–157, and 169–189; these read ALTF…TGAF, WIIG…GYSL, and IMSA…WLIF. Positions 206 and 221 each coordinate heme. 5 helical membrane-spanning segments follow: residues 207–227, 259–279, 325–345, 371–391, and 408–428; these read VLII…LVWY, FGLV…INAI, AFWV…YPFI, LGVM…NDLF, and IGLI…CLGL.

It belongs to the cytochrome b family. The cytochrome bc1 complex is composed of a cytochrome b (QcrB), the Rieske protein iron-sulfur (QcrA) and a diheme cytochrome c (QcrC) subunit. Heme serves as cofactor.

The protein localises to the cell membrane. It carries out the reaction a quinol + 2 Fe(III)-[cytochrome c](out) = a quinone + 2 Fe(II)-[cytochrome c](out) + 2 H(+)(out). In terms of biological role, cytochrome b subunit of the cytochrome bc1 complex, an essential component of the respiratory electron transport chain required for ATP synthesis. The bc1 complex catalyzes the oxidation of menaquinol and the reduction of cytochrome c in the respiratory chain. The bc1 complex operates through a Q-cycle mechanism that couples electron transfer to generation of the proton gradient that drives ATP synthesis. The protein is Cytochrome bc1 complex cytochrome b subunit (qcrB) of Corynebacterium diphtheriae (strain ATCC 700971 / NCTC 13129 / Biotype gravis).